The following is a 64-amino-acid chain: Large ribosomal subunit protein bL35 (64 aa).

Over residues 1–45 (MPKMKTHKGAAKRFKKTGKGKIKRRKAFKSHILTKKTPKRKRNLR) the composition is skewed to basic residues. The tract at residues 1–64 (MPKMKTHKGA…EEKRIKRLLP (64 aa)) is disordered.

The protein belongs to the bacterial ribosomal protein bL35 family.

This is Large ribosomal subunit protein bL35 from Natranaerobius thermophilus (strain ATCC BAA-1301 / DSM 18059 / JW/NM-WN-LF).